The following is a 399-amino-acid chain: Pre-mycofactocin synthase (399 aa).

An FMN hydroxy acid dehydrogenase domain is found at 4–386 (ARDIWFETVA…VPEDILVPEG (383 aa)). Residues Ser-111 and Gln-131 each contribute to the FMN site. Tyr-133 lines the a 2-oxocarboxylate pocket. Thr-159 serves as a coordination point for FMN. Arg-168 serves as a coordination point for a 2-oxocarboxylate. FMN is bound at residue Lys-257. His-281 (proton acceptor) is an active-site residue. Residues 312–316 (DGGIR) and 335–336 (GR) contribute to the FMN site.

It belongs to the FMN-dependent alpha-hydroxy acid dehydrogenase family. Requires FMN as cofactor.

The catalysed reaction is 3-amino-5-[(4-hydroxyphenyl)methyl]-4,4-dimethyl-2-pyrrolidin-2-one + O2 + H2O = pre-mycofactocin + H2O2 + NH4(+). Functionally, involved in the biosynthesis of the enzyme cofactor mycofactocin (MFT). Catalyzes the oxidative deamination of AHDP (3-amino-5-[(4-hydroxyphenyl)methyl]-4,4-dimethyl-2-pyrrolidin-2-one), forming an alpha-keto amide moiety on the resulting molecule, which is called pre-mycofactocin (PMFT). This reaction occurs via a 5-[(4-hydroxyphenyl)methyl]-3-imino-4,4-dimethylpyrrolidin-2-one intermediate, which converts to PMFT. The alpha-keto amide moiety is the redox-active center for the redox activity of mycofactocin. Is required for the in vivo ethanol assimilation in M.smegmatis. In Mycolicibacterium smegmatis (strain ATCC 700084 / mc(2)155) (Mycobacterium smegmatis), this protein is Pre-mycofactocin synthase.